Consider the following 100-residue polypeptide: Nucleoid-associated protein HPSH_00175 (100 aa).

Belongs to the YbaB/EbfC family. As to quaternary structure, homodimer.

Its subcellular location is the cytoplasm. It is found in the nucleoid. Functionally, binds to DNA and alters its conformation. May be involved in regulation of gene expression, nucleoid organization and DNA protection. The polypeptide is Nucleoid-associated protein HPSH_00175 (Helicobacter pylori (strain Shi470)).